Here is a 279-residue protein sequence, read N- to C-terminus: Phosphate import ATP-binding protein PstB (279 aa).

Residues 33-274 (LDINKLNLFY…PLKKKTEDYI (242 aa)) form the ABC transporter domain. Position 65–72 (65–72 (GPSGCGKS)) interacts with ATP.

Belongs to the ABC transporter superfamily. Phosphate importer (TC 3.A.1.7) family. As to quaternary structure, the complex is composed of two ATP-binding proteins (PstB), two transmembrane proteins (PstC and PstA) and a solute-binding protein (PstS).

It localises to the cell inner membrane. The catalysed reaction is phosphate(out) + ATP + H2O = ADP + 2 phosphate(in) + H(+). Functionally, part of the ABC transporter complex PstSACB involved in phosphate import. Responsible for energy coupling to the transport system. The chain is Phosphate import ATP-binding protein PstB from Colwellia psychrerythraea (strain 34H / ATCC BAA-681) (Vibrio psychroerythus).